A 365-amino-acid polypeptide reads, in one-letter code: Serpentine receptor class epsilon-38 (365 aa).

Transmembrane regions (helical) follow at residues 26–46 (GMYL…GVII), 65–85 (IMTA…LLII), 124–144 (ALVI…FGIL), 168–188 (IPVF…YFVL), 196–216 (LGTS…LAVW), 256–276 (LVIV…CLVI), and 285–305 (IFIH…CSTL).

This sequence belongs to the nematode receptor-like protein sre family.

The protein resides in the membrane. In Caenorhabditis elegans, this protein is Serpentine receptor class epsilon-38 (sre-38).